We begin with the raw amino-acid sequence, 124 residues long: MATINQLVRKPRSRKVAKSDVPALQGCPQRRGVCTRVYTTTPKKPNSALRKVCRVRLTNGYEVTSYIGGEGHNLQEHSVVLIRGGRVKDLPGVRYHTVRGTLDTAGVNDRRQGRSKYGAKRGKS.

Residues 1-22 are disordered; that stretch reads MATINQLVRKPRSRKVAKSDVP. A 3-methylthioaspartic acid modification is found at Asp89. The tract at residues 104 to 124 is disordered; it reads TAGVNDRRQGRSKYGAKRGKS. Residues 113–124 are compositionally biased toward basic residues; that stretch reads GRSKYGAKRGKS.

It belongs to the universal ribosomal protein uS12 family. In terms of assembly, part of the 30S ribosomal subunit. Contacts proteins S8 and S17. May interact with IF1 in the 30S initiation complex.

In terms of biological role, with S4 and S5 plays an important role in translational accuracy. Interacts with and stabilizes bases of the 16S rRNA that are involved in tRNA selection in the A site and with the mRNA backbone. Located at the interface of the 30S and 50S subunits, it traverses the body of the 30S subunit contacting proteins on the other side and probably holding the rRNA structure together. The combined cluster of proteins S8, S12 and S17 appears to hold together the shoulder and platform of the 30S subunit. The chain is Small ribosomal subunit protein uS12 from Hahella chejuensis (strain KCTC 2396).